A 180-amino-acid chain; its full sequence is Required for excision 1-B domain-containing protein (180 aa).

The disordered stretch occupies residues 1–23 (MITAEAASESTVPAVPGDTAATG).

This Bos taurus (Bovine) protein is Required for excision 1-B domain-containing protein.